We begin with the raw amino-acid sequence, 572 residues long: Proline--tRNA ligase (572 aa).

The protein belongs to the class-II aminoacyl-tRNA synthetase family. ProS type 1 subfamily. Homodimer.

Its subcellular location is the cytoplasm. The enzyme catalyses tRNA(Pro) + L-proline + ATP = L-prolyl-tRNA(Pro) + AMP + diphosphate. Catalyzes the attachment of proline to tRNA(Pro) in a two-step reaction: proline is first activated by ATP to form Pro-AMP and then transferred to the acceptor end of tRNA(Pro). As ProRS can inadvertently accommodate and process non-cognate amino acids such as alanine and cysteine, to avoid such errors it has two additional distinct editing activities against alanine. One activity is designated as 'pretransfer' editing and involves the tRNA(Pro)-independent hydrolysis of activated Ala-AMP. The other activity is designated 'posttransfer' editing and involves deacylation of mischarged Ala-tRNA(Pro). The misacylated Cys-tRNA(Pro) is not edited by ProRS. In Escherichia coli O7:K1 (strain IAI39 / ExPEC), this protein is Proline--tRNA ligase.